Consider the following 117-residue polypeptide: Ig heavy chain V region MOPC 173 (117 aa).

The Ig-like domain occupies 1 to 116; that stretch reads EVKLLESGGP…WGQGTSVTVS (116 aa). Cys-22 and Cys-96 form a disulfide bridge.

The protein is Ig heavy chain V region MOPC 173 of Mus musculus (Mouse).